The chain runs to 378 residues: Mating-type protein MAT-1 (378 aa).

The segment at residues 60–117 (KAKKALNAFVGFRCYYIAIPAFKPWPMKKLSNLISLLWEGDPNKSLWSLMAKAWSNIR) is a DNA-binding region (alpha box). The tract at residues 235 to 256 (SQVDQARVAARNRRRAKRQSAR) is disordered. Basic residues predominate over residues 244–253 (ARNRRRAKRQ).

The protein belongs to the MATALPHA1 family.

It is found in the nucleus. In terms of biological role, mating type proteins are sequence specific DNA-binding proteins that act as master switches in fungal differentiation by controlling gene expression in a cell type-specific fashion. Transcriptional activator that induces the transcription of alpha-specific genes. The protein is Mating-type protein MAT-1 (MAT1) of Cochliobolus ellisii (Curvularia ellisii).